The primary structure comprises 834 residues: ABC transporter A family member 11 (834 aa).

A run of 7 helical transmembrane segments spans residues 35–55 (FFILGILLPMISIGASIILNN), 188–208 (MPMILQYGFVFFIPYFAILIV), 235–255 (VFDYLIFLIPTIIGWILLYSF), 269–289 (FLLFLTFGISAIPFGFVLQFI), 297–319 (NKWLYPFTSIVTSIPSALISVAF), 324–346 (PLIVELLLSILPTFSFCNGLKAL), and 355–375 (SYTILIQLLSGLIYLILIYFI). The 242-residue stretch at 452–693 (LDKPSIIERC…YGSGYTIDII (242 aa)) folds into the ABC transporter domain. 495-502 (GPNGSGKS) contributes to the ATP binding site. Residues 779–789 (KQQTNNKSNII) are compositionally biased toward polar residues. The tract at residues 779–834 (KQQTNNKSNIINNNNNNNNNNNNNNNNNNNNNNNNNNNNNNNNNTNNNTNNNQLIN) is disordered. Low complexity predominate over residues 790–834 (NNNNNNNNNNNNNNNNNNNNNNNNNNNNNNNNNTNNNTNNNQLIN).

Belongs to the ABC transporter superfamily. ABCA family.

It localises to the membrane. The sequence is that of ABC transporter A family member 11 (abcA11) from Dictyostelium discoideum (Social amoeba).